Consider the following 100-residue polypeptide: MIKLTVSHHKLTASGHALFAKKGQDIVCAAVSGIIFGALPWFETNSIAVQEDATVPSLSLELVQPTAKLITGLSVVIMQLKTLAHSYPQFISFEDQRKDE.

Histidine 16 serves as the catalytic Proton donor. The Nucleophile role is filled by cysteine 28.

This sequence belongs to the Prp family. As to quaternary structure, homodimer.

Its function is as follows. An essential cysteine protease that cleaves the N-terminus from ribosomal protein bL27. The polypeptide is Ribosomal processing cysteine protease Prp (Mycoplasma pneumoniae (strain ATCC 29342 / M129 / Subtype 1) (Mycoplasmoides pneumoniae)).